Here is a 361-residue protein sequence, read N- to C-terminus: Histidinol-phosphate aminotransferase (361 aa).

A disordered region spans residues 26 to 45; sequence GMDPEDLTKLSSNENPHGPS. Lysine 222 is modified (N6-(pyridoxal phosphate)lysine).

It belongs to the class-II pyridoxal-phosphate-dependent aminotransferase family. Histidinol-phosphate aminotransferase subfamily. Pyridoxal 5'-phosphate is required as a cofactor.

It catalyses the reaction L-histidinol phosphate + 2-oxoglutarate = 3-(imidazol-4-yl)-2-oxopropyl phosphate + L-glutamate. Its pathway is amino-acid biosynthesis; L-histidine biosynthesis; L-histidine from 5-phospho-alpha-D-ribose 1-diphosphate: step 7/9. The sequence is that of Histidinol-phosphate aminotransferase (hisC) from Haloferax volcanii (strain ATCC 29605 / DSM 3757 / JCM 8879 / NBRC 14742 / NCIMB 2012 / VKM B-1768 / DS2) (Halobacterium volcanii).